The primary structure comprises 155 residues: Ribosomal RNA large subunit methyltransferase H (155 aa).

S-adenosyl-L-methionine-binding positions include L73, G104, and 123-128 (LSPLTL).

Belongs to the RNA methyltransferase RlmH family. As to quaternary structure, homodimer.

The protein localises to the cytoplasm. The catalysed reaction is pseudouridine(1915) in 23S rRNA + S-adenosyl-L-methionine = N(3)-methylpseudouridine(1915) in 23S rRNA + S-adenosyl-L-homocysteine + H(+). Its function is as follows. Specifically methylates the pseudouridine at position 1915 (m3Psi1915) in 23S rRNA. The sequence is that of Ribosomal RNA large subunit methyltransferase H from Pseudomonas fluorescens (strain ATCC BAA-477 / NRRL B-23932 / Pf-5).